Reading from the N-terminus, the 159-residue chain is Cyclic pyranopterin monophosphate synthase (159 aa).

Substrate-binding positions include 75 to 77 (LCH) and 113 to 114 (ME). The active site involves Asp-128.

It belongs to the MoaC family. As to quaternary structure, homohexamer; trimer of dimers.

It carries out the reaction (8S)-3',8-cyclo-7,8-dihydroguanosine 5'-triphosphate = cyclic pyranopterin phosphate + diphosphate. It functions in the pathway cofactor biosynthesis; molybdopterin biosynthesis. In terms of biological role, catalyzes the conversion of (8S)-3',8-cyclo-7,8-dihydroguanosine 5'-triphosphate to cyclic pyranopterin monophosphate (cPMP). This chain is Cyclic pyranopterin monophosphate synthase, found in Cupriavidus necator (strain ATCC 17699 / DSM 428 / KCTC 22496 / NCIMB 10442 / H16 / Stanier 337) (Ralstonia eutropha).